Reading from the N-terminus, the 168-residue chain is Transcription antitermination protein NusB (168 aa).

It belongs to the NusB family.

Its function is as follows. Involved in transcription antitermination. Required for transcription of ribosomal RNA (rRNA) genes. Binds specifically to the boxA antiterminator sequence of the ribosomal RNA (rrn) operons. The polypeptide is Transcription antitermination protein NusB (Chlamydia trachomatis serovar A (strain ATCC VR-571B / DSM 19440 / HAR-13)).